The primary structure comprises 488 residues: Aerolysin (488 aa).

The first 24 residues, 1–24, serve as a signal peptide directing secretion; the sequence is MMNRIITANLAFLASSLMLAQVQA. Disulfide bonds link Cys-43/Cys-99 and Cys-183/Cys-188. Positions 69–85 are interaction with host N-linked glycan; the sequence is WQITGLADRWVIMGPGY. Positions 256–288 are part of the transmembrane beta-barrel after proteolytic activation of the toxin and insertion into the host membrane; that stretch reads YSLSEKVTTKNKFQWPLVGETELAIEIAASQSW. The interval 346-355 is interaction with glycans from host GPI-anchor; it reads RWGGNAWYTH. Residues 444-488 constitute a propeptide that is removed on maturation; sequence TRSAKAAQLRSASAEEVALTSVDLDSEALANEGFGNVSLTIVPVQ.

It belongs to the aerolysin family. As to quaternary structure, homodimer in solution; homoheptamer in the host membrane. After binding to GPI-anchored proteins in target membranes and proteolytic removal of the C-terminal propeptide, the protein assembles into a heptameric pre-pore complex. A further conformation change leads to insertion into the host membrane. In terms of processing, proteolytic cleavage and subsequent release of the propeptide trigger a major conformation change, leading to the formation of a heptameric pre-pore that then inserts into the host membrane.

The protein resides in the secreted. It is found in the host cell membrane. Functionally, secreted, cytolytic toxin that forms pores in host membranes after proteolytic removal of a C-terminal propeptide, leading to destruction of the membrane permeability barrier and cell death. The pores are formed by transmembrane beta-strands and are approximately 3 nm in diameter. This is Aerolysin (asa1) from Aeromonas sobria.